The sequence spans 213 residues: MQAYQRDFIRFAIERGVLRFGEFTLKSGRTSPYFFNAGLFDSGLALARLGRFYAEAVIDSGIDFDVLFGPAYKGIPLAATTAVALAEQHRRDLPWCFNRKEAKDHGEGGTLVGAPLSGRVLIIDDVITAGTAIREVMQIIDAQGARAAGVLIALNRQERGKGELSAIQEVERDFGMPVVSIVSLEQVLEYLAGDAELKKHLPAVEAYRAQYGI.

Residue lysine 26 participates in 5-phospho-alpha-D-ribose 1-diphosphate binding. 34–35 contributes to the orotate binding site; sequence FF. Residues 72-73, arginine 99, lysine 100, lysine 103, histidine 105, and 124-132 contribute to the 5-phospho-alpha-D-ribose 1-diphosphate site; these read YK and DDVITAGTA. 2 residues coordinate orotate: threonine 128 and arginine 156.

The protein belongs to the purine/pyrimidine phosphoribosyltransferase family. PyrE subfamily. In terms of assembly, homodimer. Mg(2+) is required as a cofactor.

It catalyses the reaction orotidine 5'-phosphate + diphosphate = orotate + 5-phospho-alpha-D-ribose 1-diphosphate. It participates in pyrimidine metabolism; UMP biosynthesis via de novo pathway; UMP from orotate: step 1/2. In terms of biological role, catalyzes the transfer of a ribosyl phosphate group from 5-phosphoribose 1-diphosphate to orotate, leading to the formation of orotidine monophosphate (OMP). The protein is Orotate phosphoribosyltransferase of Pseudomonas paraeruginosa (strain DSM 24068 / PA7) (Pseudomonas aeruginosa (strain PA7)).